Reading from the N-terminus, the 647-residue chain is Threonine--tRNA ligase (647 aa).

Residues 1–61 (MIKITFPDGA…EEDGSIEIVT (61 aa)) form the TGS domain. Positions 240–538 (DHRKLGKELD…LIETYKGAFP (299 aa)) are catalytic. Zn(2+)-binding residues include C334, H385, and H515.

This sequence belongs to the class-II aminoacyl-tRNA synthetase family. As to quaternary structure, homodimer. Zn(2+) serves as cofactor.

It is found in the cytoplasm. It catalyses the reaction tRNA(Thr) + L-threonine + ATP = L-threonyl-tRNA(Thr) + AMP + diphosphate + H(+). Its function is as follows. Catalyzes the attachment of threonine to tRNA(Thr) in a two-step reaction: L-threonine is first activated by ATP to form Thr-AMP and then transferred to the acceptor end of tRNA(Thr). Also edits incorrectly charged L-seryl-tRNA(Thr). The protein is Threonine--tRNA ligase of Streptococcus pyogenes serotype M3 (strain ATCC BAA-595 / MGAS315).